Here is a 664-residue protein sequence, read N- to C-terminus: MPEEKNTFYITTPIYYPSGKAHIGHAYTTVAGDAMARYKRLKGYDVFYLTGTDEHGQKIQAKAKERGISEQEYVDEIAEGFQELWKKLEISNTDFIRTTQDRHKTSVEKIFEQLLEQGDIYLGEYEGWYSVSDEEYFTETQLEEVYKDENGKVIGGKAPSGNEVELVKEESYFFRMSKYADRLVEYYNSHPEFILPESRKNEMINNFIKPGLEDLAVSRTTFDWGIKVPGNPKHVVYVWIDALSNYITALGYNTDNDTKFQKYWPADVQIVGKEIVRFHTIYWPIMLMALDLPLPKMVFGHGWILMKDGKMSKSKGNVVDPYMLIDRYGLDALRYYLLREVPFGSDGLFTPEDFVDRVNYDLANDLGNLLNRTVAMINKYFDGEIPAYQGNVTEFDQTLVDFKNNVVKEYEGSMDHMQFSVALNQLWSLISRTNKYIDETAPWALAKEEDKRTELASVMTHLAENLRIIAVLLQPFLTRTPGEIFLQLGLQEENLKKWDSIYGYGEIPEGTTVVKKGTPIFPRLDAEVEVTYIQDEMKGSAPAPAEETAEVEALETPQIGIEDFDKIDLRVAEVKQVDKVKKADKLLCFQLDLGEGKLRQVLSGIAEFYQPEELIGKKVIVVSNLKPVKLRGLMSEGMILSGEKDGKLSVIEANSALPNGAKVK.

Residues 15–25 carry the 'HIGH' region motif; sequence YYPSGKAHIGH. Residues 310-314 carry the 'KMSKS' region motif; sequence KMSKS. Lys313 is a binding site for ATP. Positions 563-664 constitute a tRNA-binding domain; that stretch reads DFDKIDLRVA…SALPNGAKVK (102 aa).

It belongs to the class-I aminoacyl-tRNA synthetase family. MetG type 2B subfamily. Homodimer.

The protein resides in the cytoplasm. The enzyme catalyses tRNA(Met) + L-methionine + ATP = L-methionyl-tRNA(Met) + AMP + diphosphate. Functionally, is required not only for elongation of protein synthesis but also for the initiation of all mRNA translation through initiator tRNA(fMet) aminoacylation. The polypeptide is Methionine--tRNA ligase (metG) (Listeria innocua serovar 6a (strain ATCC BAA-680 / CLIP 11262)).